The chain runs to 358 residues: Hydroxyproline O-arabinosyltransferase 3 (358 aa).

A helical; Signal-anchor membrane pass occupies residues Leu-8–Val-28.

Ubiquitous.

The protein resides in the golgi apparatus. It localises to the cis-Golgi network membrane. It carries out the reaction trans-4-hydroxy-L-prolyl-[protein] + UDP-beta-L-arabinofuranose = O-(beta-L-arabinofuranosyl)-trans-4-hydroxy-L-prolyl-[protein] + UDP + H(+). In terms of biological role, glycosyltransferase involved in the O-arabinosylation of several proteins including extensins and small signaling peptides. Catalyzes the transfer of the initial L-arabinose to the hydroxyl group of Hyp residues. Contributes redundantly with HPAT1 and HPAT2 to arabinosylation of EXT3, but main contributor to arabinosylation of CLE peptides. The polypeptide is Hydroxyproline O-arabinosyltransferase 3 (Arabidopsis thaliana (Mouse-ear cress)).